Consider the following 262-residue polypeptide: 2-aminoethylphosphonate dioxygenase (262 aa).

Residue Lys-108 participates in 2-oxoglutarate binding. Fe cation is bound by residues His-118, Asp-120, and His-198.

This sequence belongs to the PhyH family. Fe(2+) serves as cofactor.

The catalysed reaction is (2-aminoethyl)phosphonate + 2-oxoglutarate + O2 = (1R)-(2-amino-1-hydroxyethyl)phosphonate + succinate + CO2. With respect to regulation, activity is enhanced by ascorbate. Involved in the degradation of the organophosphonate 2-aminoethylphosphonic acid (2-AEP). Catalyzes the hydroxylation of 2-aminoethylphosphonic acid to yield (2-amino-1-hydroxyethyl)phosphonic acid. The protein is 2-aminoethylphosphonate dioxygenase of Uncultured bacterium HF130_AEPn_1.